The primary structure comprises 437 residues: 26S proteasome subunit RPT4 (437 aa).

A disordered region spans residues 1–51 (MSEEQDPLLAGLGETSGDNHTQQSHEQQPEQPQETEEHHEEEPSRVDPEQE). S2 is subject to N-acetylserine. Low complexity predominate over residues 20-32 (HTQQSHEQQPEQP). The span at 35–51 (TEEHHEEEPSRVDPEQE) shows a compositional bias: basic and acidic residues. Residue 222–229 (GPPGTGKT) participates in ATP binding.

The protein belongs to the AAA ATPase family. In terms of processing, N-acetylated by NAT1.

Its function is as follows. The 26S proteasome is involved in the ATP-dependent degradation of ubiquitinated proteins. The regulatory (or ATPase) complex confers ATP dependency and substrate specificity to the 26S complex. The polypeptide is 26S proteasome subunit RPT4 (RPT4) (Saccharomyces cerevisiae (strain ATCC 204508 / S288c) (Baker's yeast)).